We begin with the raw amino-acid sequence, 229 residues long: Enolase-phosphatase E1 (229 aa).

Positions 207–229 are disordered; sequence RDPASHHPQVQRFDDIHPEQIPA. Basic and acidic residues predominate over residues 218–229; the sequence is RFDDIHPEQIPA.

Belongs to the HAD-like hydrolase superfamily. MasA/MtnC family. In terms of assembly, monomer. Mg(2+) serves as cofactor.

It catalyses the reaction 5-methylsulfanyl-2,3-dioxopentyl phosphate + H2O = 1,2-dihydroxy-5-(methylsulfanyl)pent-1-en-3-one + phosphate. The protein operates within amino-acid biosynthesis; L-methionine biosynthesis via salvage pathway; L-methionine from S-methyl-5-thio-alpha-D-ribose 1-phosphate: step 3/6. It functions in the pathway amino-acid biosynthesis; L-methionine biosynthesis via salvage pathway; L-methionine from S-methyl-5-thio-alpha-D-ribose 1-phosphate: step 4/6. Functionally, bifunctional enzyme that catalyzes the enolization of 2,3-diketo-5-methylthiopentyl-1-phosphate (DK-MTP-1-P) into the intermediate 2-hydroxy-3-keto-5-methylthiopentenyl-1-phosphate (HK-MTPenyl-1-P), which is then dephosphorylated to form the acireductone 1,2-dihydroxy-3-keto-5-methylthiopentene (DHK-MTPene). This is Enolase-phosphatase E1 from Klebsiella pneumoniae subsp. pneumoniae (strain ATCC 700721 / MGH 78578).